A 434-amino-acid polypeptide reads, in one-letter code: Putative MgpC-like protein MPN_149 (434 aa).

Disordered regions lie at residues 168-193 (GSGQ…PKAV) and 215-267 (EPLD…DNNG). A compositionally biased stretch (polar residues) spans 170–184 (GQESSWNSQRSQKVL). The segment covering 218–229 (DSTKDGKGKDES) has biased composition (basic and acidic residues). The segment covering 248-267 (STGSQMAAVTDSQQSGDNNG) has biased composition (polar residues).

The protein belongs to the MgpC family.

This Mycoplasma pneumoniae (strain ATCC 29342 / M129 / Subtype 1) (Mycoplasmoides pneumoniae) protein is Putative MgpC-like protein MPN_149.